Here is a 70-residue protein sequence, read N- to C-terminus: Brevinin-1PLc (70 aa).

Positions 1–22 are cleaved as a signal peptide; sequence MFTLKKSMLLLFFLGTINLSLC. Residues 23-44 constitute a propeptide that is removed on maturation; sequence EEERNAEEERRDEPDEMDVEVE. The cysteines at positions 64 and 70 are disulfide-linked.

In terms of tissue distribution, expressed by the skin glands.

It localises to the secreted. Its function is as follows. Antimicrobial activity against the Gram-negative bacterium E.coli, the Gram-positive bacterium S.aureus and the yeast C.albicans. In Lithobates palustris (Pickerel frog), this protein is Brevinin-1PLc.